A 92-amino-acid polypeptide reads, in one-letter code: Endoribonuclease VapD homolog (92 aa).

The protein belongs to the VapD ribonuclease family. As to quaternary structure, homodimer.

Functionally, cleaves ssRNA, mostly between U:A. The protein is Endoribonuclease VapD homolog of Neisseria gonorrhoeae.